A 525-amino-acid polypeptide reads, in one-letter code: GMP synthase [glutamine-hydrolyzing] (525 aa).

The region spanning 8–207 (KILILDFGSQ…ALDICGCKAN (200 aa)) is the Glutamine amidotransferase type-1 domain. The active-site Nucleophile is Cys85. Catalysis depends on residues His181 and Glu183. The 193-residue stretch at 208–400 (WKPSSIIEDA…LGLPYNMLYR (193 aa)) folds into the GMPS ATP-PPase domain. Residue 235 to 241 (SGGVDSS) participates in ATP binding.

As to quaternary structure, homodimer.

It catalyses the reaction XMP + L-glutamine + ATP + H2O = GMP + L-glutamate + AMP + diphosphate + 2 H(+). Its pathway is purine metabolism; GMP biosynthesis; GMP from XMP (L-Gln route): step 1/1. Catalyzes the synthesis of GMP from XMP. In Shewanella frigidimarina (strain NCIMB 400), this protein is GMP synthase [glutamine-hydrolyzing].